The sequence spans 450 residues: Molybdate-anion transporter (450 aa).

Helical transmembrane passes span 1–21 (MLVT…GLEL), 43–63 (LDFY…APYL), 79–99 (ILYV…SSLV), 128–148 (FVLL…FSAF), 176–196 (FWNH…ACWM), 198–218 (LGPV…GALA), 249–269 (VLLL…FVFL), 278–298 (GAPL…GSSL), 311–331 (PMHL…MLTF), 344–364 (FIAF…MSFL), 376–396 (GVLN…LLVL), and 409–429 (FSIC…LFTV).

Belongs to the major facilitator superfamily.

The protein localises to the cell membrane. Functionally, mediates high-affinity intracellular uptake of the rare oligo-element molybdenum. The sequence is that of Molybdate-anion transporter (MFSD5) from Bos taurus (Bovine).